Here is a 159-residue protein sequence, read N- to C-terminus: Transcription elongation factor GreA (159 aa).

This sequence belongs to the GreA/GreB family.

Necessary for efficient RNA polymerase transcription elongation past template-encoded arresting sites. The arresting sites in DNA have the property of trapping a certain fraction of elongating RNA polymerases that pass through, resulting in locked ternary complexes. Cleavage of the nascent transcript by cleavage factors such as GreA or GreB allows the resumption of elongation from the new 3'terminus. GreA releases sequences of 2 to 3 nucleotides. This Orientia tsutsugamushi (strain Boryong) (Rickettsia tsutsugamushi) protein is Transcription elongation factor GreA.